A 699-amino-acid chain; its full sequence is MAYLLTFGIIAALCLASISLYRYGNIPRQHILVTLSVLTAWCFSFLIVFTIPLDVTSTLYRQCLAEHKLALDAAGNASTTANITPPPECQEPWGMVPESVFPNLWRIIYWSSQFLTWLIMPLMQSYLKAGDFTIKGKLKSALIENAIYYGSYLFICGVLLIYIAVKGVPLDWQKLKAIASSASNTWGLFLLILLLGYALVEVPRSLWNNAKPGFTLQYAYFKAAKLSTDKAEAEEHVDDILESLQCISRVVPNNHELRPCVETIMRKVPIELQERASRNFSRTGGSGMGATSSTILPSEKALVRIHKQVIKSLQTLQRTEALWSVQVDTVLHLEDVARNIHSAERRFKSEFPRQRTQLERIFYSATLQWYWECLLKAPFLKTLCVVTATMSAMVVWSEVTFFSRDPVLSIFANVIYLAKESYDFFTIEVFSMMVLCYFFYCTYSTILRIRFLNLYYLAPHHQTNEHSLIFSGMLLCRLTPPMCLNFLGLIHMDSHIIPERMMETYYTRIMGHMDVIGIISNGFNIYFPMCMLAFCLSTWFSLGSRALNALGFQQFLQNETIATELVQEGKDLIAREKRRRQRAEEAMARRRDFNRPDPTVASNDYMNKYRSGAGALAGSRTPADGLLRDGDGSFDYAAVASSSALGVPRSLSEEINDRFGVSTQMQVGFRGTSELDPDYEAENERRIVGPPPRGLFDDV.

Residues 1 to 3 are Extracellular-facing; that stretch reads MAY. The chain crosses the membrane as a helical span at residues 4–26; it reads LLTFGIIAALCLASISLYRYGNI. Over 27–30 the chain is Cytoplasmic; sequence PRQH. A helical membrane pass occupies residues 31–51; the sequence is ILVTLSVLTAWCFSFLIVFTI. Topologically, residues 52–106 are extracellular; it reads PLDVTSTLYRQCLAEHKLALDAAGNASTTANITPPPECQEPWGMVPESVFPNLWR. Asparagine 76 carries N-linked (GlcNAc...) asparagine glycosylation. The chain crosses the membrane as a helical span at residues 107–127; sequence IIYWSSQFLTWLIMPLMQSYL. At 128–144 the chain is on the cytoplasmic side; it reads KAGDFTIKGKLKSALIE. The helical transmembrane segment at 145 to 165 threads the bilayer; the sequence is NAIYYGSYLFICGVLLIYIAV. Residues 166-181 lie on the Extracellular side of the membrane; the sequence is KGVPLDWQKLKAIASS. The chain crosses the membrane as a helical span at residues 182–202; the sequence is ASNTWGLFLLILLLGYALVEV. The Cytoplasmic portion of the chain corresponds to 203–381; that stretch reads PRSLWNNAKP…ECLLKAPFLK (179 aa). The chain crosses the membrane as a helical span at residues 382-402; sequence TLCVVTATMSAMVVWSEVTFF. The Extracellular portion of the chain corresponds to 403 to 426; sequence SRDPVLSIFANVIYLAKESYDFFT. A helical membrane pass occupies residues 427–447; it reads IEVFSMMVLCYFFYCTYSTIL. The Cytoplasmic portion of the chain corresponds to 448-467; the sequence is RIRFLNLYYLAPHHQTNEHS. A helical membrane pass occupies residues 468–488; it reads LIFSGMLLCRLTPPMCLNFLG. Residues 489 to 514 are Extracellular-facing; it reads LIHMDSHIIPERMMETYYTRIMGHMD. A helical transmembrane segment spans residues 515–535; it reads VIGIISNGFNIYFPMCMLAFC. The Cytoplasmic portion of the chain corresponds to 536-699; that stretch reads LSTWFSLGSR…PPPRGLFDDV (164 aa). A coiled-coil region spans residues 564–592; it reads ELVQEGKDLIAREKRRRQRAEEAMARRRD. Residues 669 to 699 are disordered; that stretch reads FRGTSELDPDYEAENERRIVGPPPRGLFDDV.

It belongs to the LIMR family.

The protein resides in the membrane. The polypeptide is LMBR1 domain-containing protein 2 homolog (Drosophila pseudoobscura pseudoobscura (Fruit fly)).